A 1482-amino-acid polypeptide reads, in one-letter code: Chromosome partition protein MukB (1482 aa).

Residue 34-41 (GGNGAGKS) coordinates ATP. Coiled-coil stretches lie at residues 337 to 418 (LNLV…QYQQ), 444 to 472 (LDTY…QTAH), 509 to 601 (RHLA…TSHA), 781 to 805 (AARE…ATLS), 835 to 1116 (EAEI…AKAG), and 1210 to 1265 (EAIE…LQSV). The segment at 666 to 783 (PGGAEDARLN…SVPLFGRAAR (118 aa)) is flexible hinge. Residues 1049-1077 (ADAGAEERARQRRDELHTRLSNNRSRRNQ) are disordered. A compositionally biased stretch (basic and acidic residues) spans 1051-1066 (AGAEERARQRRDELHT).

Belongs to the SMC family. MukB subfamily. Homodimerization via its hinge domain. Binds to DNA via its C-terminal region. Interacts, and probably forms a ternary complex, with MukE and MukF via its C-terminal region. The complex formation is stimulated by calcium or magnesium. Interacts with tubulin-related protein FtsZ.

It localises to the cytoplasm. The protein localises to the nucleoid. Its function is as follows. Plays a central role in chromosome condensation, segregation and cell cycle progression. Functions as a homodimer, which is essential for chromosome partition. Involved in negative DNA supercoiling in vivo, and by this means organize and compact chromosomes. May achieve or facilitate chromosome segregation by condensation DNA from both sides of a centrally located replisome during cell division. In Cronobacter sakazakii (strain ATCC BAA-894) (Enterobacter sakazakii), this protein is Chromosome partition protein MukB.